The primary structure comprises 218 residues: Small ribosomal subunit protein uS3c (218 aa).

Residues 43-118 (IKNYVQKNTR…KLNIAITRIG (76 aa)) form the KH type-2 domain.

Belongs to the universal ribosomal protein uS3 family. Part of the 30S ribosomal subunit.

It localises to the plastid. It is found in the chloroplast. In Gossypium barbadense (Sea Island cotton), this protein is Small ribosomal subunit protein uS3c (rps3).